We begin with the raw amino-acid sequence, 341 residues long: DNA-directed RNA polymerase subunit alpha (341 aa).

Positions 1–233 are alpha N-terminal domain (alpha-NTD); that stretch reads MVREEVPVST…DLFIPFLHAE (233 aa). Residues 266–341 are alpha C-terminal domain (alpha-CTD); it reads IILKRIFIDQ…LKNSNQFESR (76 aa).

It belongs to the RNA polymerase alpha chain family. As to quaternary structure, in plastids the minimal PEP RNA polymerase catalytic core is composed of four subunits: alpha, beta, beta', and beta''. When a (nuclear-encoded) sigma factor is associated with the core the holoenzyme is formed, which can initiate transcription.

Its subcellular location is the plastid. It is found in the chloroplast. The enzyme catalyses RNA(n) + a ribonucleoside 5'-triphosphate = RNA(n+1) + diphosphate. DNA-dependent RNA polymerase catalyzes the transcription of DNA into RNA using the four ribonucleoside triphosphates as substrates. This is DNA-directed RNA polymerase subunit alpha from Nymphaea alba (White water-lily).